The following is an 89-amino-acid chain: MAKKSKVVKHERQKALVEQYAELRRTLKAEGRYEELRKLPRDSTPSRLHNRCALTGRPHGYMRKFGMSRIRFRELAHQGQLPGVKKASW.

It belongs to the universal ribosomal protein uS14 family. As to quaternary structure, part of the 30S ribosomal subunit. Contacts proteins S3 and S10.

Binds 16S rRNA, required for the assembly of 30S particles and may also be responsible for determining the conformation of the 16S rRNA at the A site. In Listeria welshimeri serovar 6b (strain ATCC 35897 / DSM 20650 / CCUG 15529 / CIP 8149 / NCTC 11857 / SLCC 5334 / V8), this protein is Small ribosomal subunit protein uS14A.